The primary structure comprises 98 residues: Integration host factor subunit beta (98 aa).

Belongs to the bacterial histone-like protein family. As to quaternary structure, heterodimer of an alpha and a beta chain.

Functionally, this protein is one of the two subunits of integration host factor, a specific DNA-binding protein that functions in genetic recombination as well as in transcriptional and translational control. The polypeptide is Integration host factor subunit beta (Pseudomonas syringae pv. tomato (strain ATCC BAA-871 / DC3000)).